We begin with the raw amino-acid sequence, 600 residues long: Aspartate--tRNA(Asp/Asn) ligase (600 aa).

E174 provides a ligand contact to L-aspartate. Residues 198–201 (QLFK) are aspartate. R220 contacts L-aspartate. ATP-binding positions include 220 to 222 (RDE) and Q229. H457 lines the L-aspartate pocket. Position 491 (E491) interacts with ATP. An L-aspartate-binding site is contributed by R498. Position 543–546 (543–546 (GLDR)) interacts with ATP.

It belongs to the class-II aminoacyl-tRNA synthetase family. Type 1 subfamily. As to quaternary structure, homodimer.

It is found in the cytoplasm. It catalyses the reaction tRNA(Asx) + L-aspartate + ATP = L-aspartyl-tRNA(Asx) + AMP + diphosphate. Functionally, aspartyl-tRNA synthetase with relaxed tRNA specificity since it is able to aspartylate not only its cognate tRNA(Asp) but also tRNA(Asn). Reaction proceeds in two steps: L-aspartate is first activated by ATP to form Asp-AMP and then transferred to the acceptor end of tRNA(Asp/Asn). In Burkholderia vietnamiensis (strain G4 / LMG 22486) (Burkholderia cepacia (strain R1808)), this protein is Aspartate--tRNA(Asp/Asn) ligase.